A 204-amino-acid polypeptide reads, in one-letter code: Venom allergen 5 (204 aa).

4 disulfides stabilise this stretch: Cys4–Cys17, Cys8–Cys101, Cys26–Cys94, and Cys170–Cys187. The SCP domain maps to 45–189 (LKEHNDFRQK…WHKHYLVCNY (145 aa)).

The protein belongs to the CRISP family. Venom allergen 5-like subfamily. In terms of tissue distribution, expressed by the venom gland.

It is found in the secreted. In Vespula maculifrons (Eastern yellow jacket), this protein is Venom allergen 5.